The chain runs to 74 residues: uncharacterized protein (74 aa).

This is an uncharacterized protein from Enterobacteria phage T4 (Bacteriophage T4).